The sequence spans 154 residues: SsrA-binding protein (154 aa).

Belongs to the SmpB family.

The protein localises to the cytoplasm. Functionally, required for rescue of stalled ribosomes mediated by trans-translation. Binds to transfer-messenger RNA (tmRNA), required for stable association of tmRNA with ribosomes. tmRNA and SmpB together mimic tRNA shape, replacing the anticodon stem-loop with SmpB. tmRNA is encoded by the ssrA gene; the 2 termini fold to resemble tRNA(Ala) and it encodes a 'tag peptide', a short internal open reading frame. During trans-translation Ala-aminoacylated tmRNA acts like a tRNA, entering the A-site of stalled ribosomes, displacing the stalled mRNA. The ribosome then switches to translate the ORF on the tmRNA; the nascent peptide is terminated with the 'tag peptide' encoded by the tmRNA and targeted for degradation. The ribosome is freed to recommence translation, which seems to be the essential function of trans-translation. This is SsrA-binding protein from Gluconacetobacter diazotrophicus (strain ATCC 49037 / DSM 5601 / CCUG 37298 / CIP 103539 / LMG 7603 / PAl5).